The chain runs to 372 residues: MNINVNIKNIIIDKPLKLDCGQTINNYSLAYETYGSLNENKDNAILIFHALTGDQFVSGINPITKKEGWWSYAVGSGKAIDTDKYFVICANVIGGCMGSYGPSEINPDTNKKYGTTFPVITINDMVNAQFNLLNFFNIEKLFAVMGGSMGGMQTLQFVNNFPDKAKVAIPIACTASHSAQNIAFNELGRQSIMADANWENGDYSNQNKNPNKGLSVARMAAHITYLSKNGLQEKFGRKLQERDDLKFGFDADFQIESYLRYQGSVFVDRFDANSYLYITRAMDYFDLVKEHHGNLSKAFEKTKTKFLIISFTSDWLYPTSENKEIVIALNAIGAEVGFVEIESDKGHDSFLLKVPKFLNTLGDYIKTAYSKN.

The AB hydrolase-1 domain occupies 43–353 (NAILIFHALT…DKGHDSFLLK (311 aa)). Serine 148 (nucleophile) is an active-site residue. Arginine 218 is a binding site for substrate. Residues aspartate 314 and histidine 347 contribute to the active site. Aspartate 348 contributes to the substrate binding site.

This sequence belongs to the AB hydrolase superfamily. MetX family. In terms of assembly, homodimer.

It is found in the cytoplasm. It catalyses the reaction L-homoserine + acetyl-CoA = O-acetyl-L-homoserine + CoA. It functions in the pathway amino-acid biosynthesis; L-methionine biosynthesis via de novo pathway; O-acetyl-L-homoserine from L-homoserine: step 1/1. In terms of biological role, transfers an acetyl group from acetyl-CoA to L-homoserine, forming acetyl-L-homoserine. This Pelagibacter ubique (strain HTCC1062) protein is Homoserine O-acetyltransferase.